The sequence spans 606 residues: UvrABC system protein C (606 aa).

Residues 14 to 93 enclose the GIY-YIG domain; it reads QNPGVYLMKD…IKKHSPRYNV (80 aa). Residues 203–238 form the UVR domain; that stretch reads PDLINRLKFEMQTEADLEHFERAAQIRDTILAIQTT.

Belongs to the UvrC family. Interacts with UvrB in an incision complex.

The protein resides in the cytoplasm. Its function is as follows. The UvrABC repair system catalyzes the recognition and processing of DNA lesions. UvrC both incises the 5' and 3' sides of the lesion. The N-terminal half is responsible for the 3' incision and the C-terminal half is responsible for the 5' incision. This chain is UvrABC system protein C, found in Desulforapulum autotrophicum (strain ATCC 43914 / DSM 3382 / VKM B-1955 / HRM2) (Desulfobacterium autotrophicum).